Reading from the N-terminus, the 720-residue chain is Glycine--tRNA ligase beta subunit (720 aa).

This sequence belongs to the class-II aminoacyl-tRNA synthetase family. In terms of assembly, tetramer of two alpha and two beta subunits.

The protein resides in the cytoplasm. It catalyses the reaction tRNA(Gly) + glycine + ATP = glycyl-tRNA(Gly) + AMP + diphosphate. The polypeptide is Glycine--tRNA ligase beta subunit (Acidovorax sp. (strain JS42)).